The following is a 346-amino-acid chain: MSSTKDMSTVQNATPFNGVAPSTTVRVTIVQSSTVYNDTPATIDKAEKYIVEAASKGAELVLFPEGFIGGYPRGFRFGLAVGVHNEEGRDEFRKYHASAIHVPGPEVARLADVARKNHVYLVMGAIEKEGYTLYCTVLFFSPQGQFLGKHRKLMPTSLERCIWGQGDGSTIPVYDTPIGKLGAAICWENRMPLYRTALYAKGIELYCAPTADGSKEWQSSMLHIAIEGGCFVLSACQFCQRKHFPDHPDYLFTDWYDDKEHDSIVSQGGSVIISPLGQVLAGPNFESEGLVTADIDLGDIARAKLYFDSVGHYSRPDVLHLTVNEHPRKSVTFVTKVEKAEDDSNK.

Ser-2 is subject to N-acetylserine. Residues 25–297 (VRVTIVQSST…EGLVTADIDL (273 aa)) form the CN hydrolase domain. Glu-65 acts as the Proton acceptor in catalysis. The active-site Proton donor is the Lys-152. The Nucleophile role is filled by Cys-186.

This sequence belongs to the carbon-nitrogen hydrolase superfamily. Nitrilase family. In terms of assembly, interacts with DEK3. Expressed in cotyledons, hypocotyls, leaves, roots, stems, flowers and siliques.

The catalysed reaction is a nitrile + 2 H2O = a carboxylate + NH4(+). Can convert indole-3-acetonitrile to the plant hormone indole-3-acetic acid. The chain is Nitrilase 1 from Arabidopsis thaliana (Mouse-ear cress).